Reading from the N-terminus, the 237-residue chain is uncharacterized protein (237 aa).

A disordered region spans residues 213–237 (GQGKYLKLDSNTTENKTTKQNETGG). Residues 223–237 (NTTENKTTKQNETGG) are compositionally biased toward low complexity.

This is an uncharacterized protein from Methanothermobacter thermautotrophicus (Methanobacterium thermoformicicum).